The chain runs to 996 residues: Oxysterol-binding protein homolog 3 (996 aa).

The segment at 1–183 (METIDIQNRS…KKKILFNASV (183 aa)) is GOLD domain. The interval 75–114 (GSSSNIEEHHRRSSQHSHSSSNGSDNKRKERSYSSLSISG) is disordered. 2 positions are modified to phosphoserine: S190 and S193. T210 carries the post-translational modification Phosphothreonine. In terms of domain architecture, PH spans 221 to 315 (GRYLQGYLLK…WVDALQTCFD (95 aa)). Position 323 is a phosphothreonine (T323). A Phosphoserine modification is found at S324. A phosphothreonine mark is found at T325 and T352. The tract at residues 338–372 (EVINKSSPQDHDHLTPTATTKSALSHRQHTQKDMD) is disordered. Residues 514–520 (EFFDAEE) carry the FFAT motif. Positions 556–611 (KEVQLSGSEQIASSSVESYTTNDENHSRKHLKNRHKNRRRGHPHHQKTKSAQSSTE) are disordered. A compositionally biased stretch (polar residues) spans 558–577 (VQLSGSEQIASSSVESYTTN). Residues 582–603 (SRKHLKNRHKNRRRGHPHHQKT) are compositionally biased toward basic residues. At S605 the chain carries Phosphoserine. An OSBP-related domain (ORD) region spans residues 642-982 (SLLSFLRKNV…YITGPKSYWE (341 aa)). A 1,2-diacyl-sn-glycero-3-phospho-(1D-myo-inositol 4-phosphate) contacts are provided by residues 657 to 660 (SIAM), K717, 745 to 746 (HR), and 945 to 949 (EQLQR).

The protein belongs to the OSBP family. As to quaternary structure, interacts with SCS2.

It is found in the cytoplasm. It localises to the endoplasmic reticulum membrane. Its function is as follows. Lipid transport protein (LTP) involved in non-vesicular transfer of lipids between membranes. Functions in phosphoinositide-coupled directional transport of various lipids by carrying the lipid molecule in a hydrophobic pocket and transferring it between membranes through the cytosol. Involved in maintenance of intracellular sterol distribution and homeostasis. May serve as a sensor of PI4P levels at PM-ER membrane contact site, regulating PI4P phosphatase SAC1 activity. May be involved in ergosterol transport from the plasma membrane (PM) to the ER, however it does not bind sterols directly. Plays a role in the positive regulation of vesicular transport of ceramide from the ER to the Golgi, negatively regulating COPII-mediated ER export of cargos. In Saccharomyces cerevisiae (strain ATCC 204508 / S288c) (Baker's yeast), this protein is Oxysterol-binding protein homolog 3.